A 454-amino-acid chain; its full sequence is tRNA modification GTPase MnmE (454 aa).

(6S)-5-formyl-5,6,7,8-tetrahydrofolate-binding residues include Arg-23, Glu-80, and Lys-120. A TrmE-type G domain is found at 216 to 377 (GMKVVIAGRP…LRNHLKQSMG (162 aa)). Asn-226 contacts K(+). Residues 226–231 (NAGKSS), 245–251 (TDIAGTT), 270–273 (DTAG), 335–338 (NKAD), and 358–360 (SAR) each bind GTP. Residue Ser-230 participates in Mg(2+) binding. Residues Thr-245, Ile-247, and Thr-250 each contribute to the K(+) site. Position 251 (Thr-251) interacts with Mg(2+). Lys-454 serves as a coordination point for (6S)-5-formyl-5,6,7,8-tetrahydrofolate.

It belongs to the TRAFAC class TrmE-Era-EngA-EngB-Septin-like GTPase superfamily. TrmE GTPase family. As to quaternary structure, homodimer. Heterotetramer of two MnmE and two MnmG subunits. The cofactor is K(+).

Its subcellular location is the cytoplasm. In terms of biological role, exhibits a very high intrinsic GTPase hydrolysis rate. Involved in the addition of a carboxymethylaminomethyl (cmnm) group at the wobble position (U34) of certain tRNAs, forming tRNA-cmnm(5)s(2)U34. The polypeptide is tRNA modification GTPase MnmE (Escherichia coli O17:K52:H18 (strain UMN026 / ExPEC)).